Reading from the N-terminus, the 185-residue chain is Putative manganese efflux pump MntP (185 aa).

6 helical membrane-spanning segments follow: residues 3-23 (IFTL…VSLA), 40-60 (LLFV…VSVI), 64-84 (FDAY…LRMI), 102-122 (TFSR…AVGI), 124-144 (LSLA…FVLI), and 165-185 (EIFG…DAMM).

The protein belongs to the MntP (TC 9.B.29) family.

It is found in the cell inner membrane. Probably functions as a manganese efflux pump. The polypeptide is Putative manganese efflux pump MntP (Elusimicrobium minutum (strain Pei191)).